A 298-amino-acid polypeptide reads, in one-letter code: uncharacterized protein (298 aa).

Transmembrane regions (helical) follow at residues 5 to 23, 33 to 52, 72 to 91, 101 to 120, 127 to 145, 149 to 166, 175 to 194, 207 to 229, 238 to 260, and 265 to 284; these read ILVSLLASFLFGYMYYFST, IFGYRMIFTFPFVLLSVTLF, ALSYLLCGLLMGFQMWLFLW, VSFGYLLLPIVMVAAGRVFF, FKFIAVIIATLGVISNIVL, LSWEAIVICLGYTAYFSI, LASFCLEMLSLMPVSIYFAL, FIWGXLVLLGLISGTALIAYVIA, LGLLGYVETIMMLCVSFLIGEQI, and YPLFICLVIAMILVMVDGVY. The EamA domain maps to 13–144; sequence FLFGYMYYFS…ATLGVISNIV (132 aa).

Belongs to the EamA transporter family.

The protein localises to the cell membrane. This is an uncharacterized protein from Haemophilus influenzae (strain ATCC 51907 / DSM 11121 / KW20 / Rd).